Reading from the N-terminus, the 68-residue chain is MDRFLIKLIKIYKKFVSPALPNSCRYYPTCSSYAIQSIEKYGALKGSLKAVWRILRCNPFSKGGVDYP.

Belongs to the UPF0161 family.

The protein resides in the cell inner membrane. Could be involved in insertion of integral membrane proteins into the membrane. The chain is Putative membrane protein insertion efficiency factor from Persephonella marina (strain DSM 14350 / EX-H1).